The sequence spans 121 residues: SITQEQLEKTARTFRQVCQPKHKISDEVADAVNRGVFADTKDFKCYVSCLLDIMQVARKGKVNYEKSLKQIDTMLPDHMKPAFRAGLEACKSAAQGVKDHCEAAAILLQCFYKNNPKFVFP.

2 cysteine pairs are disulfide-bonded: cysteine 45-cysteine 101 and cysteine 90-cysteine 110.

Belongs to the PBP/GOBP family.

The protein resides in the secreted. Its function is as follows. Present in the aqueous fluid surrounding olfactory sensory dendrites and are thought to aid in the capture and transport of hydrophobic odorants into and through this fluid. In Anopheles gambiae (African malaria mosquito), this protein is General odorant-binding protein 72 (Obp72).